Consider the following 95-residue polypeptide: Glutamyl-tRNA(Gln) amidotransferase subunit C (95 aa).

Belongs to the GatC family. Heterotrimer of A, B and C subunits.

The enzyme catalyses L-glutamyl-tRNA(Gln) + L-glutamine + ATP + H2O = L-glutaminyl-tRNA(Gln) + L-glutamate + ADP + phosphate + H(+). The catalysed reaction is L-aspartyl-tRNA(Asn) + L-glutamine + ATP + H2O = L-asparaginyl-tRNA(Asn) + L-glutamate + ADP + phosphate + 2 H(+). Allows the formation of correctly charged Asn-tRNA(Asn) or Gln-tRNA(Gln) through the transamidation of misacylated Asp-tRNA(Asn) or Glu-tRNA(Gln) in organisms which lack either or both of asparaginyl-tRNA or glutaminyl-tRNA synthetases. The reaction takes place in the presence of glutamine and ATP through an activated phospho-Asp-tRNA(Asn) or phospho-Glu-tRNA(Gln). This is Glutamyl-tRNA(Gln) amidotransferase subunit C from Moraxella catarrhalis (Branhamella catarrhalis).